A 352-amino-acid polypeptide reads, in one-letter code: S-adenosylmethionine:tRNA ribosyltransferase-isomerase (352 aa).

This sequence belongs to the QueA family. In terms of assembly, monomer.

Its subcellular location is the cytoplasm. It carries out the reaction 7-aminomethyl-7-carbaguanosine(34) in tRNA + S-adenosyl-L-methionine = epoxyqueuosine(34) in tRNA + adenine + L-methionine + 2 H(+). Its pathway is tRNA modification; tRNA-queuosine biosynthesis. Functionally, transfers and isomerizes the ribose moiety from AdoMet to the 7-aminomethyl group of 7-deazaguanine (preQ1-tRNA) to give epoxyqueuosine (oQ-tRNA). In Syntrophomonas wolfei subsp. wolfei (strain DSM 2245B / Goettingen), this protein is S-adenosylmethionine:tRNA ribosyltransferase-isomerase.